We begin with the raw amino-acid sequence, 81 residues long: Large ribosomal subunit protein bL27 (81 aa).

The disordered stretch occupies residues 1 to 22; sequence MAHKKGQGSSRNGRDSNAQRRG.

It belongs to the bacterial ribosomal protein bL27 family.

This is Large ribosomal subunit protein bL27 from Rhodopirellula baltica (strain DSM 10527 / NCIMB 13988 / SH1).